Consider the following 240-residue polypeptide: UDP-2,3-diacylglucosamine hydrolase (240 aa).

Mn(2+) is bound by residues aspartate 8, histidine 10, aspartate 41, asparagine 79, and histidine 114. 79–80 (NR) is a binding site for substrate. Substrate contacts are provided by aspartate 122, serine 160, asparagine 164, lysine 167, and histidine 195. Residues histidine 195 and histidine 197 each contribute to the Mn(2+) site.

This sequence belongs to the LpxH family. It depends on Mn(2+) as a cofactor.

It localises to the cell inner membrane. The catalysed reaction is UDP-2-N,3-O-bis[(3R)-3-hydroxytetradecanoyl]-alpha-D-glucosamine + H2O = 2-N,3-O-bis[(3R)-3-hydroxytetradecanoyl]-alpha-D-glucosaminyl 1-phosphate + UMP + 2 H(+). Its pathway is glycolipid biosynthesis; lipid IV(A) biosynthesis; lipid IV(A) from (3R)-3-hydroxytetradecanoyl-[acyl-carrier-protein] and UDP-N-acetyl-alpha-D-glucosamine: step 4/6. Its function is as follows. Hydrolyzes the pyrophosphate bond of UDP-2,3-diacylglucosamine to yield 2,3-diacylglucosamine 1-phosphate (lipid X) and UMP by catalyzing the attack of water at the alpha-P atom. Involved in the biosynthesis of lipid A, a phosphorylated glycolipid that anchors the lipopolysaccharide to the outer membrane of the cell. This is UDP-2,3-diacylglucosamine hydrolase from Salmonella agona (strain SL483).